We begin with the raw amino-acid sequence, 286 residues long: Phospholipase A1 (286 aa).

The first 20 residues, 1–20 (MRISLACLAALCALPAGVMA), serve as a signal peptide directing secretion. Over 21–49 (QDASVHDKPAVRGSIIANLLQDHDNPFLL) the chain is Periplasmic. The beta stranded transmembrane segment at 50-62 (YPYESNYLLYTWT) threads the bilayer. At 63-81 (SDLNKEAIRSYDWAENARK) the chain is on the extracellular side. Residues 82 to 96 (DEVKFQLSLAFPLWR) traverse the membrane as a beta stranded segment. Over 97–102 (GILGDN) the chain is Periplasmic. Residues 103–115 (SLLGASYTQKSWW) traverse the membrane as a beta stranded segment. The Extracellular portion of the chain corresponds to 116 to 125 (QLSNSKESAP). S123 provides a ligand contact to Ca(2+). Residues 126-145 (FRETNYEPQLFLGFATDYQF) traverse the membrane as a beta stranded segment. The Periplasmic portion of the chain corresponds to 146–147 (AG). Residues 148–161 (WTLRDIEMGYNHDS) traverse the membrane as a beta stranded segment. The active-site Proton acceptor is H159. S161 serves as the catalytic Nucleophile. The Extracellular portion of the chain corresponds to 162–170 (NGRSDPTSR). 2 residues coordinate Ca(2+): R164 and S169. A beta stranded transmembrane segment spans residues 171 to 183 (SWNRLYARLMAQN). The Periplasmic portion of the chain corresponds to 184–185 (GN). A beta stranded membrane pass occupies residues 186 to 195 (WLVEVKPWYV). The Extracellular segment spans residues 196-213 (VGSTDDNPDITKYMGYYR). D201 is a Ca(2+) binding site. The beta stranded transmembrane segment at 214–220 (LKVGYQL) threads the bilayer. Over 221-222 (GE) the chain is Periplasmic. A beta stranded transmembrane segment spans residues 223-231 (AILSAQGQY). Over 232-238 (NWNTGYG) the chain is Extracellular. The beta stranded transmembrane segment at 239-247 (GAELGVSYP) threads the bilayer. Topologically, residues 248-252 (ITKHV) are periplasmic. The chain crosses the membrane as a beta stranded span at residues 253 to 262 (RAYTQIYSGY). The Extracellular portion of the chain corresponds to 263 to 271 (GESLIDYNF). Residues 272–283 (NQTRVGVGLMLN) form a beta stranded membrane-spanning segment. The Periplasmic portion of the chain corresponds to 284–286 (DLF).

This sequence belongs to the phospholipase A1 family. In terms of assembly, homodimer; dimerization is reversible, and the dimeric form is the active one. It depends on Ca(2+) as a cofactor.

The protein localises to the cell outer membrane. It carries out the reaction a 1,2-diacyl-sn-glycero-3-phosphocholine + H2O = a 2-acyl-sn-glycero-3-phosphocholine + a fatty acid + H(+). The enzyme catalyses a 1,2-diacyl-sn-glycero-3-phosphocholine + H2O = a 1-acyl-sn-glycero-3-phosphocholine + a fatty acid + H(+). Hydrolysis of phosphatidylcholine with phospholipase A2 (EC 3.1.1.4) and phospholipase A1 (EC 3.1.1.32) activities. The chain is Phospholipase A1 (pldA) from Klebsiella pneumoniae.